A 732-amino-acid chain; its full sequence is Aldehyde oxidoreductase molybdenum-binding subunit PaoC (732 aa).

Residues 241 to 242 (GF), 468 to 470 (IGT), 511 to 512 (GA), 615 to 621 (RILNPKT), Q625, and 688 to 691 (KGVG) contribute to the Mo-molybdopterin cytosine dinucleotide site. The active-site Proton acceptor is the E692.

The protein belongs to the xanthine dehydrogenase family. Heterotrimer composed of PaoA, PaoB and PaoC. The cofactor is Mo-molybdopterin cytosine dinucleotide.

The protein resides in the periplasm. It catalyses the reaction an aldehyde + A + H2O = a carboxylate + AH2 + H(+). In terms of biological role, oxidizes aldehydes to the corresponding carboxylic acids with a preference for aromatic aldehydes. It might play a role in the detoxification of aldehydes to avoid cell damage. The chain is Aldehyde oxidoreductase molybdenum-binding subunit PaoC from Escherichia coli O157:H7.